The chain runs to 488 residues: ATP synthase subunit beta (488 aa).

164-171 provides a ligand contact to ATP; it reads GGAGVGKT.

Belongs to the ATPase alpha/beta chains family. F-type ATPases have 2 components, CF(1) - the catalytic core - and CF(0) - the membrane proton channel. CF(1) has five subunits: alpha(3), beta(3), gamma(1), delta(1), epsilon(1). CF(0) has four main subunits: a(1), b(1), b'(1) and c(9-12).

It localises to the cellular thylakoid membrane. It catalyses the reaction ATP + H2O + 4 H(+)(in) = ADP + phosphate + 5 H(+)(out). Its function is as follows. Produces ATP from ADP in the presence of a proton gradient across the membrane. The catalytic sites are hosted primarily by the beta subunits. The chain is ATP synthase subunit beta from Prochlorococcus marinus (strain MIT 9211).